The sequence spans 352 residues: Secreted RxLR effector protein 122 (352 aa).

Residues 1 to 21 (MRGAYYVLIALLVVASSQTSA) form the signal peptide. Residues 48-65 (QFLRGSRNVPGDLAHEER) carry the RxLR-dEER motif. Residues 280–290 (RGGTTGASRGT) are compositionally biased toward low complexity. The interval 280 to 352 (RGGTTGASRG…VEPEGHRSKP (73 aa)) is disordered. The segment covering 302 to 315 (AASTSKGKSSVFTE) has biased composition (polar residues).

It belongs to the RxLR effector family.

Its subcellular location is the secreted. The protein localises to the host nucleus. Functionally, secreted effector that acts as an elicitor that induces cell death in host plant cells. In Plasmopara viticola (Downy mildew of grapevine), this protein is Secreted RxLR effector protein 122.